A 572-amino-acid chain; its full sequence is Far upstream element-binding protein 3 (572 aa).

Position 2 is an N-acetylalanine (A2). Residues K15 and K57 each participate in a glycyl lysine isopeptide (Lys-Gly) (interchain with G-Cter in SUMO2) cross-link. The residue at position 76 (T76) is a Phosphothreonine. KH domains lie at 77 to 141 (VITE…KRLL), 162 to 228 (STIQ…REMV), 253 to 317 (GGSI…AHII), and 354 to 421 (VQEI…RQLI). S296 carries the phosphoserine modification. The segment at 426-521 (GGTNLGAPGA…SQPNYSKAWE (96 aa)) is disordered. Positions 496–514 (QQPTQQVPSQQSQPQSSQP) are enriched in low complexity. Residues S539 and S569 each carry the phosphoserine modification.

In terms of tissue distribution, detected in a number of cell lines.

It localises to the nucleus. Functionally, may interact with single-stranded DNA from the far-upstream element (FUSE). May activate gene expression. In Homo sapiens (Human), this protein is Far upstream element-binding protein 3 (FUBP3).